The following is a 307-amino-acid chain: Aspartate carbamoyltransferase catalytic subunit (307 aa).

Residues R54 and T55 each contribute to the carbamoyl phosphate site. K83 contributes to the L-aspartate binding site. Residues R104, H132, and Q135 each contribute to the carbamoyl phosphate site. Residues R165 and R228 each coordinate L-aspartate. Carbamoyl phosphate is bound by residues L267 and P268.

It belongs to the aspartate/ornithine carbamoyltransferase superfamily. ATCase family. As to quaternary structure, heterododecamer (2C3:3R2) of six catalytic PyrB chains organized as two trimers (C3), and six regulatory PyrI chains organized as three dimers (R2).

The catalysed reaction is carbamoyl phosphate + L-aspartate = N-carbamoyl-L-aspartate + phosphate + H(+). Its pathway is pyrimidine metabolism; UMP biosynthesis via de novo pathway; (S)-dihydroorotate from bicarbonate: step 2/3. In terms of biological role, catalyzes the condensation of carbamoyl phosphate and aspartate to form carbamoyl aspartate and inorganic phosphate, the committed step in the de novo pyrimidine nucleotide biosynthesis pathway. This chain is Aspartate carbamoyltransferase catalytic subunit, found in Clostridium perfringens (strain 13 / Type A).